The following is a 237-amino-acid chain: Mitochondrial carrier-like protein L276 (237 aa).

Solcar repeat units follow at residues 1–83, 85–161, and 164–233; these read MAKY…FENK, YPYT…LNEY, and KPVV…LNKK. 5 consecutive transmembrane segments (helical) span residues 11–27, 60–76, 91–108, 140–160, and 166–183; these read AIAT…ICTF, VPAI…KYFL, MING…THPI, SFGK…TLNE, and VVSS…MQPL. The Substrate recognition signature appears at 191-196; that stretch reads IYGLSL. Residues 205-226 traverse the membrane as a helical segment; sequence YYRGLSLNLMRIVPHFVITMTT.

It belongs to the mitochondrial carrier (TC 2.A.29) family.

It localises to the host mitochondrion inner membrane. Transports dATP and to a lesser extent dTTP, TTP, UTP and ADP, possibly across the mitochondrial inner membrane. In Acanthamoeba polyphaga (Amoeba), this protein is Mitochondrial carrier-like protein L276.